The following is a 364-amino-acid chain: Dihydroorotate dehydrogenase (quinone) (364 aa).

FMN is bound by residues 61-65 (AGFDK) and Ser85. Lys65 contributes to the substrate binding site. 110 to 114 (NRMGF) serves as a coordination point for substrate. Positions 139 and 170 each coordinate FMN. Asn170 serves as a coordination point for substrate. Ser173 serves as the catalytic Nucleophile. Residue Asn175 participates in substrate binding. 2 residues coordinate FMN: Lys214 and Ser242. Position 243–244 (243–244 (NT)) interacts with substrate. Residues Gly266, Gly295, and 316 to 317 (YS) each bind FMN.

This sequence belongs to the dihydroorotate dehydrogenase family. Type 2 subfamily. In terms of assembly, monomer. FMN is required as a cofactor.

The protein resides in the cell membrane. The catalysed reaction is (S)-dihydroorotate + a quinone = orotate + a quinol. It participates in pyrimidine metabolism; UMP biosynthesis via de novo pathway; orotate from (S)-dihydroorotate (quinone route): step 1/1. In terms of biological role, catalyzes the conversion of dihydroorotate to orotate with quinone as electron acceptor. The polypeptide is Dihydroorotate dehydrogenase (quinone) (Bradyrhizobium sp. (strain ORS 278)).